Here is a 383-residue protein sequence, read N- to C-terminus: tRNA (guanine(26)-N(2))-dimethyltransferase (383 aa).

The 368-residue stretch at 4-371 folds into the Trm1 methyltransferase domain; that stretch reads EIITEGRTPL…ASPEEFEAVL (368 aa). The S-adenosyl-L-methionine site is built by Arg38, Arg63, Asp80, Asp108, and Ala109. 4 residues coordinate Zn(2+): Cys243, Cys246, Cys258, and Cys261.

It belongs to the class I-like SAM-binding methyltransferase superfamily. Trm1 family.

It carries out the reaction guanosine(26) in tRNA + 2 S-adenosyl-L-methionine = N(2)-dimethylguanosine(26) in tRNA + 2 S-adenosyl-L-homocysteine + 2 H(+). Functionally, dimethylates a single guanine residue at position 26 of a number of tRNAs using S-adenosyl-L-methionine as donor of the methyl groups. This is tRNA (guanine(26)-N(2))-dimethyltransferase from Methanopyrus kandleri (strain AV19 / DSM 6324 / JCM 9639 / NBRC 100938).